A 298-amino-acid chain; its full sequence is GTP cyclohydrolase FolE2 (298 aa).

It belongs to the GTP cyclohydrolase IV family.

The enzyme catalyses GTP + H2O = 7,8-dihydroneopterin 3'-triphosphate + formate + H(+). Its pathway is cofactor biosynthesis; 7,8-dihydroneopterin triphosphate biosynthesis; 7,8-dihydroneopterin triphosphate from GTP: step 1/1. In terms of biological role, converts GTP to 7,8-dihydroneopterin triphosphate. The polypeptide is GTP cyclohydrolase FolE2 (Neisseria meningitidis serogroup B (strain ATCC BAA-335 / MC58)).